Reading from the N-terminus, the 169-residue chain is ATP synthase subunit b (169 aa).

The helical transmembrane segment at 11–31 (IPSFIAQIVNFGLLLGLLYLF) threads the bilayer.

The protein belongs to the ATPase B chain family. In terms of assembly, F-type ATPases have 2 components, F(1) - the catalytic core - and F(0) - the membrane proton channel. F(1) has five subunits: alpha(3), beta(3), gamma(1), delta(1), epsilon(1). F(0) has three main subunits: a(1), b(2) and c(10-14). The alpha and beta chains form an alternating ring which encloses part of the gamma chain. F(1) is attached to F(0) by a central stalk formed by the gamma and epsilon chains, while a peripheral stalk is formed by the delta and b chains.

It localises to the cell membrane. Functionally, f(1)F(0) ATP synthase produces ATP from ADP in the presence of a proton or sodium gradient. F-type ATPases consist of two structural domains, F(1) containing the extramembraneous catalytic core and F(0) containing the membrane proton channel, linked together by a central stalk and a peripheral stalk. During catalysis, ATP synthesis in the catalytic domain of F(1) is coupled via a rotary mechanism of the central stalk subunits to proton translocation. In terms of biological role, component of the F(0) channel, it forms part of the peripheral stalk, linking F(1) to F(0). The chain is ATP synthase subunit b from Dehalococcoides mccartyi (strain ATCC BAA-2100 / JCM 16839 / KCTC 5957 / BAV1).